The primary structure comprises 252 residues: Diphthine synthase (252 aa).

Residues Leu-9, Asp-85, Val-88, 113–114, Leu-165, Ala-204, and His-229 each bind S-adenosyl-L-methionine; that span reads SI.

The protein belongs to the diphthine synthase family. Homodimer.

It catalyses the reaction 2-[(3S)-amino-3-carboxypropyl]-L-histidyl-[translation elongation factor 2] + 3 S-adenosyl-L-methionine = diphthine-[translation elongation factor 2] + 3 S-adenosyl-L-homocysteine + 3 H(+). It participates in protein modification; peptidyl-diphthamide biosynthesis. Its function is as follows. S-adenosyl-L-methionine-dependent methyltransferase that catalyzes the trimethylation of the amino group of the modified target histidine residue in translation elongation factor 2 (EF-2), to form an intermediate called diphthine. The three successive methylation reactions represent the second step of diphthamide biosynthesis. The polypeptide is Diphthine synthase (Methanocorpusculum labreanum (strain ATCC 43576 / DSM 4855 / Z)).